We begin with the raw amino-acid sequence, 445 residues long: 6-phosphogluconate dehydrogenase, decarboxylating (445 aa).

NADP(+) contacts are provided by residues 1–4 (AVMG), 22–24 (NRS), 63–65 (VKA), and Asn-91. Substrate is bound by residues Asn-91 and 117–119 (SGG). Lys-172 serves as the catalytic Proton acceptor. A substrate-binding site is contributed by 175–176 (HN). Glu-179 (proton donor) is an active-site residue. Substrate contacts are provided by Tyr-180, Lys-249, Arg-276, Arg-434, and His-440.

Belongs to the 6-phosphogluconate dehydrogenase family. In terms of assembly, homodimer.

It carries out the reaction 6-phospho-D-gluconate + NADP(+) = D-ribulose 5-phosphate + CO2 + NADPH. Its pathway is carbohydrate degradation; pentose phosphate pathway; D-ribulose 5-phosphate from D-glucose 6-phosphate (oxidative stage): step 3/3. In terms of biological role, catalyzes the oxidative decarboxylation of 6-phosphogluconate to ribulose 5-phosphate and CO(2), with concomitant reduction of NADP to NADPH. The polypeptide is 6-phosphogluconate dehydrogenase, decarboxylating (gnd) (Shigella dysenteriae).